Reading from the N-terminus, the 349-residue chain is Holliday junction branch migration complex subunit RuvB (349 aa).

A large ATPase domain (RuvB-L) region spans residues 1–185 (MSQEKERLIS…FGSIFRLDFY (185 aa)). Residues L24, R25, G66, K69, T70, T71, 132–134 (EDY), R175, Y185, and R222 contribute to the ATP site. A Mg(2+)-binding site is contributed by T70. Positions 186–256 (DEEAIHDIVR…IAAESLACLE (71 aa)) are small ATPAse domain (RuvB-S). The head domain (RuvB-H) stretch occupies residues 259–349 (KLGLDEIDHK…QQGLWTENGS (91 aa)). 2 residues coordinate DNA: R314 and R319.

It belongs to the RuvB family. As to quaternary structure, homohexamer. Forms an RuvA(8)-RuvB(12)-Holliday junction (HJ) complex. HJ DNA is sandwiched between 2 RuvA tetramers; dsDNA enters through RuvA and exits via RuvB. An RuvB hexamer assembles on each DNA strand where it exits the tetramer. Each RuvB hexamer is contacted by two RuvA subunits (via domain III) on 2 adjacent RuvB subunits; this complex drives branch migration. In the full resolvosome a probable DNA-RuvA(4)-RuvB(12)-RuvC(2) complex forms which resolves the HJ.

It localises to the cytoplasm. The enzyme catalyses ATP + H2O = ADP + phosphate + H(+). In terms of biological role, the RuvA-RuvB-RuvC complex processes Holliday junction (HJ) DNA during genetic recombination and DNA repair, while the RuvA-RuvB complex plays an important role in the rescue of blocked DNA replication forks via replication fork reversal (RFR). RuvA specifically binds to HJ cruciform DNA, conferring on it an open structure. The RuvB hexamer acts as an ATP-dependent pump, pulling dsDNA into and through the RuvAB complex. RuvB forms 2 homohexamers on either side of HJ DNA bound by 1 or 2 RuvA tetramers; 4 subunits per hexamer contact DNA at a time. Coordinated motions by a converter formed by DNA-disengaged RuvB subunits stimulates ATP hydrolysis and nucleotide exchange. Immobilization of the converter enables RuvB to convert the ATP-contained energy into a lever motion, pulling 2 nucleotides of DNA out of the RuvA tetramer per ATP hydrolyzed, thus driving DNA branch migration. The RuvB motors rotate together with the DNA substrate, which together with the progressing nucleotide cycle form the mechanistic basis for DNA recombination by continuous HJ branch migration. Branch migration allows RuvC to scan DNA until it finds its consensus sequence, where it cleaves and resolves cruciform DNA. The polypeptide is Holliday junction branch migration complex subunit RuvB (Dehalococcoides mccartyi (strain CBDB1)).